The sequence spans 151 residues: MREKIAALGLDVGKKRVGVAGCDGLGLIATGLTTIERTHFIADVEKFKQLVEERDIKVLVVGLPYSMNGTLGSQAKQVQNYATRLAKALQLPLEYVDERLTSYEAEEQLKAQKRFSTYNKGLVDRQAAAIILQQWLDQRRSLRLIELEDNL.

This sequence belongs to the YqgF nuclease family.

The protein resides in the cytoplasm. Could be a nuclease involved in processing of the 5'-end of pre-16S rRNA. This Gloeothece citriformis (strain PCC 7424) (Cyanothece sp. (strain PCC 7424)) protein is Putative pre-16S rRNA nuclease.